The primary structure comprises 130 residues: Small ribosomal subunit protein uS11 (130 aa).

The protein belongs to the universal ribosomal protein uS11 family. As to quaternary structure, part of the 30S ribosomal subunit. Interacts with proteins S7 and S18. Binds to IF-3.

In terms of biological role, located on the platform of the 30S subunit, it bridges several disparate RNA helices of the 16S rRNA. Forms part of the Shine-Dalgarno cleft in the 70S ribosome. The polypeptide is Small ribosomal subunit protein uS11 (Nautilia profundicola (strain ATCC BAA-1463 / DSM 18972 / AmH)).